The primary structure comprises 207 residues: Large ribosomal subunit protein uL4 (207 aa).

A disordered region spans residues 49–78 (HAVKNRSAVSGGGRKPWRQKGTGRARQGSI).

Belongs to the universal ribosomal protein uL4 family. As to quaternary structure, part of the 50S ribosomal subunit.

Functionally, one of the primary rRNA binding proteins, this protein initially binds near the 5'-end of the 23S rRNA. It is important during the early stages of 50S assembly. It makes multiple contacts with different domains of the 23S rRNA in the assembled 50S subunit and ribosome. Forms part of the polypeptide exit tunnel. The sequence is that of Large ribosomal subunit protein uL4 from Streptococcus sanguinis (strain SK36).